Reading from the N-terminus, the 492-residue chain is N-succinylglutamate 5-semialdehyde dehydrogenase (492 aa).

220-225 (GSASTG) contacts NAD(+). Residues glutamate 243 and cysteine 277 contribute to the active site.

It belongs to the aldehyde dehydrogenase family. AstD subfamily.

The enzyme catalyses N-succinyl-L-glutamate 5-semialdehyde + NAD(+) + H2O = N-succinyl-L-glutamate + NADH + 2 H(+). Its pathway is amino-acid degradation; L-arginine degradation via AST pathway; L-glutamate and succinate from L-arginine: step 4/5. Its function is as follows. Catalyzes the NAD-dependent reduction of succinylglutamate semialdehyde into succinylglutamate. This Salmonella dublin (strain CT_02021853) protein is N-succinylglutamate 5-semialdehyde dehydrogenase.